Here is a 1040-residue protein sequence, read N- to C-terminus: Multidrug resistance protein MdtB (1040 aa).

A run of 12 helical transmembrane segments spans residues 25-45 (LLMA…PVAA), 347-367 (LMLA…NIPA), 369-389 (IIPG…MVFL), 396-416 (LTLM…IVVI), 440-460 (IGFT…PLLF), 472-492 (FAVT…TLTP), 537-557 (WLTL…WIVI), 869-889 (LIVA…ESFI), 890-910 (HPIT…LALM), 911-931 (IAGS…IGIV), 968-988 (ILMT…STGV), and 998-1018 (IAMV…TPVI).

The protein belongs to the resistance-nodulation-cell division (RND) (TC 2.A.6) family. MdtB subfamily. In terms of assembly, part of a tripartite efflux system composed of MdtA, MdtB and MdtC. MdtB forms a heteromultimer with MdtC.

The protein resides in the cell inner membrane. This chain is Multidrug resistance protein MdtB, found in Salmonella arizonae (strain ATCC BAA-731 / CDC346-86 / RSK2980).